The primary structure comprises 269 residues: Hydroxyethylthiazole kinase (269 aa).

Met-45 serves as a coordination point for substrate. Arg-121 and Thr-167 together coordinate ATP. Gly-194 provides a ligand contact to substrate.

The protein belongs to the Thz kinase family. Mg(2+) is required as a cofactor.

It carries out the reaction 5-(2-hydroxyethyl)-4-methylthiazole + ATP = 4-methyl-5-(2-phosphooxyethyl)-thiazole + ADP + H(+). The protein operates within cofactor biosynthesis; thiamine diphosphate biosynthesis; 4-methyl-5-(2-phosphoethyl)-thiazole from 5-(2-hydroxyethyl)-4-methylthiazole: step 1/1. Catalyzes the phosphorylation of the hydroxyl group of 4-methyl-5-beta-hydroxyethylthiazole (THZ). The chain is Hydroxyethylthiazole kinase from Geobacillus sp. (strain WCH70).